The sequence spans 133 residues: ATP synthase epsilon chain, chloroplastic (133 aa).

This sequence belongs to the ATPase epsilon chain family. As to quaternary structure, F-type ATPases have 2 components, CF(1) - the catalytic core - and CF(0) - the membrane proton channel. CF(1) has five subunits: alpha(3), beta(3), gamma(1), delta(1), epsilon(1). CF(0) has three main subunits: a, b and c.

It localises to the plastid. Its subcellular location is the chloroplast thylakoid membrane. Its function is as follows. Produces ATP from ADP in the presence of a proton gradient across the membrane. This is ATP synthase epsilon chain, chloroplastic from Citrus sinensis (Sweet orange).